A 343-amino-acid polypeptide reads, in one-letter code: MGLLERLRKEWFIVGIILVIAAAKLEPTIGGKGGPLKPEITITYIAVSAIFFNSGLSLKTEELTNALMHVKLHLFVQLFTLVFFPTAIWVFLQVLSLTPINEWLLKGLQTVSCMPPPVSSAVILTKAVGGNEAAAIFNSAFGSFLGIVVTPLLLLLFLGSSSSVPFTSIFSQLFMTVVVPLIIGQIVRRYIKDWLERKKPPFGAISSCVLLMIIYTTFCDTFSNPNIDLDTFSLVIIVFIIFFIQLAFMLLTFLFSTSKNTGFTPADTVAIVFCSTHKSLTLGIPMLKIVFAGYEHLSLISVPLLIYHPAQILLGSVLVPTIKSWMLSRQKALKLTRQPKVPL.

At 1 to 10 (MGLLERLRKE) the chain is on the cytoplasmic side. The helical transmembrane segment at 11-31 (WFIVGIILVIAAAKLEPTIGG) threads the bilayer. Residues 32 to 37 (KGGPLK) are Extracellular-facing. The chain crosses the membrane as a helical span at residues 38-58 (PEITITYIAVSAIFFNSGLSL). Residues 59-71 (KTEELTNALMHVK) lie on the Cytoplasmic side of the membrane. The chain crosses the membrane as a helical span at residues 72–92 (LHLFVQLFTLVFFPTAIWVFL). The Extracellular segment spans residues 93 to 116 (QVLSLTPINEWLLKGLQTVSCMPP). The helical transmembrane segment at 117–137 (PVSSAVILTKAVGGNEAAAIF) threads the bilayer. Asn138 is a topological domain (cytoplasmic). The chain crosses the membrane as a helical span at residues 139 to 159 (SAFGSFLGIVVTPLLLLLFLG). Over 160–163 (SSSS) the chain is Extracellular. The helical transmembrane segment at 164–184 (VPFTSIFSQLFMTVVVPLIIG) threads the bilayer. The Cytoplasmic portion of the chain corresponds to 185-201 (QIVRRYIKDWLERKKPP). A helical membrane pass occupies residues 202-222 (FGAISSCVLLMIIYTTFCDTF). The Extracellular portion of the chain corresponds to 223-234 (SNPNIDLDTFSL). The helical transmembrane segment at 235-255 (VIIVFIIFFIQLAFMLLTFLF) threads the bilayer. Over 256–270 (STSKNTGFTPADTVA) the chain is Cytoplasmic. Residues 271 to 291 (IVFCSTHKSLTLGIPMLKIVF) form a helical membrane-spanning segment. Over 292–298 (AGYEHLS) the chain is Extracellular. A helical membrane pass occupies residues 299–319 (LISVPLLIYHPAQILLGSVLV). The Cytoplasmic portion of the chain corresponds to 320 to 343 (PTIKSWMLSRQKALKLTRQPKVPL).

It belongs to the bile acid:sodium symporter (BASS) (TC 2.A.28) family.

Its subcellular location is the cell membrane. The protein resides in the endoplasmic reticulum membrane. The protein localises to the golgi apparatus membrane. Functionally, involved in teeth and skeletal development. Has an essential role in the biosynthesis and trafficking of glycosaminoglycans and glycoproteins to produce a proper functioning extracellular matrix. Required for extracellular matrix mineralization. Also involved in the regulation of cellular calcium homeostasis. Does not show transport activity towards bile acids or steroid sulfates. The polypeptide is Sodium/bile acid cotransporter 7 (slc10a7) (Xenopus tropicalis (Western clawed frog)).